The following is a 449-amino-acid chain: CCAAT/enhancer-binding protein (449 aa).

Disordered stretches follow at residues 211 to 233 (HATY…TIKE), 276 to 302 (GNPL…NGSQ), and 334 to 386 (SKLH…KAKV). Composition is skewed to low complexity over residues 215–229 (NNSS…SDSS), 280–301 (NGGN…SNGS), and 339–349 (QQQHQQHQQQQ). Basic and acidic residues predominate over residues 357–368 (KHVDKGTDEYRR). A bZIP domain is found at 363-426 (TDEYRRRRER…QLHKQIYMQL (64 aa)). The basic motif stretch occupies residues 367 to 396 (RRRRERNNIAVRKSREKAKVRSREVEERVK). A leucine-zipper region spans residues 398 to 405 (LLKEKDAL).

It belongs to the bZIP family. C/EBP subfamily. As to quaternary structure, binds DNA as a dimer and can form stable heterodimers. Interacts with trbl. Ubiquitination/deubiquitination regulates border cell migration. Ubiquitination is stimulated by trbl, which leads to proteasomal degradation and inhibits border cell migration. Deubiquitination by Usp47, leads to its stabilization and promotes border cell migration.

Its subcellular location is the nucleus. In terms of biological role, required for the expression of gene products mediating border cell migration. Among the DNA sequences that this protein binds with high affinity is a conserved site within the promoter of its gene. This chain is CCAAT/enhancer-binding protein (slbo), found in Drosophila melanogaster (Fruit fly).